The primary structure comprises 192 residues: Peptidyl-tRNA hydrolase (192 aa).

A tRNA-binding site is contributed by tyrosine 14. Residue histidine 19 is the Proton acceptor of the active site. Residues tyrosine 66 and asparagine 68 each contribute to the tRNA site.

The protein belongs to the PTH family. As to quaternary structure, monomer.

It localises to the cytoplasm. The enzyme catalyses an N-acyl-L-alpha-aminoacyl-tRNA + H2O = an N-acyl-L-amino acid + a tRNA + H(+). Functionally, hydrolyzes ribosome-free peptidyl-tRNAs (with 1 or more amino acids incorporated), which drop off the ribosome during protein synthesis, or as a result of ribosome stalling. In terms of biological role, catalyzes the release of premature peptidyl moieties from peptidyl-tRNA molecules trapped in stalled 50S ribosomal subunits, and thus maintains levels of free tRNAs and 50S ribosomes. This Coprothermobacter proteolyticus (strain ATCC 35245 / DSM 5265 / OCM 4 / BT) protein is Peptidyl-tRNA hydrolase.